We begin with the raw amino-acid sequence, 598 residues long: MRNKICEELNKSDIGKVVNLCGWVDRRRDHGGVIFIDLRDHSGFMQITINPEDGETLFKQAEILRNETVIMVNGIVNERPKDSINKNILTGELELKVKDLQILNQIKNNLPFPISVHDYENTKEELRLKYRYLDLRRGKLLKNLKTRHKIIKAVREYLDNSGFTEVETPLLTKSTPEGARDFLVPARLSNGEFFALPQSPQLFKQLLMVGGLDKYYQIAKCFRDEDLRADRQPEFTQLDIEMSFISEEEIISFNEKLIKNVWKNVLNINFNEEFPRMTWQEAMDNYGTDRPDTRYEMLLKNLGGILGNIGFNIFTKAIQNGGAIKSITIKDGNTSISNVRIKPGGDIFKVAQDAGAGGLAFIRVKGDELETIGAIKNNLNKDHISTILKITEAKDGDLILLGAGNTQIVNQSLDRVRQYIAKDLKLIEKDKWNFLWVTDFPMFEMNEEEKRFEALHHPFCSPKNIKLEDSKELKEKIESSTAHAYDLVLNGLELGGGSLRIHQAEMQREVLRTVGLTDNQINEKFGFLIEALEMGAPPHGGIAFGVDRITMLILGEDSIRETIAFPKNQQAKCLLTNAPSNVSKSQLKELDIEITIDE.

Glutamate 177 is an L-aspartate binding site. The aspartate stretch occupies residues 201–204 (QLFK). An L-aspartate-binding site is contributed by arginine 223. Residues 223–225 (RDE) and glutamine 232 contribute to the ATP site. Histidine 456 provides a ligand contact to L-aspartate. ATP is bound at residue glutamate 493. Arginine 500 provides a ligand contact to L-aspartate. 545–548 (GVDR) lines the ATP pocket.

This sequence belongs to the class-II aminoacyl-tRNA synthetase family. Type 1 subfamily. As to quaternary structure, homodimer.

Its subcellular location is the cytoplasm. It catalyses the reaction tRNA(Asx) + L-aspartate + ATP = L-aspartyl-tRNA(Asx) + AMP + diphosphate. In terms of biological role, aspartyl-tRNA synthetase with relaxed tRNA specificity since it is able to aspartylate not only its cognate tRNA(Asp) but also tRNA(Asn). Reaction proceeds in two steps: L-aspartate is first activated by ATP to form Asp-AMP and then transferred to the acceptor end of tRNA(Asp/Asn). The protein is Aspartate--tRNA(Asp/Asn) ligase of Prochlorococcus marinus subsp. pastoris (strain CCMP1986 / NIES-2087 / MED4).